Consider the following 450-residue polypeptide: Glucose-6-phosphate isomerase (450 aa).

The Proton donor role is filled by Glu-290. Residues His-311 and Lys-425 contribute to the active site.

It belongs to the GPI family.

The protein localises to the cytoplasm. It carries out the reaction alpha-D-glucose 6-phosphate = beta-D-fructose 6-phosphate. Its pathway is carbohydrate biosynthesis; gluconeogenesis. The protein operates within carbohydrate degradation; glycolysis; D-glyceraldehyde 3-phosphate and glycerone phosphate from D-glucose: step 2/4. Its function is as follows. Catalyzes the reversible isomerization of glucose-6-phosphate to fructose-6-phosphate. The chain is Glucose-6-phosphate isomerase from Listeria innocua serovar 6a (strain ATCC BAA-680 / CLIP 11262).